Consider the following 413-residue polypeptide: Glucose-1-phosphate adenylyltransferase (413 aa).

Alpha-D-glucose 1-phosphate contacts are provided by residues glycine 161, 176 to 177 (EK), and serine 195.

Belongs to the bacterial/plant glucose-1-phosphate adenylyltransferase family. Homotetramer.

The enzyme catalyses alpha-D-glucose 1-phosphate + ATP + H(+) = ADP-alpha-D-glucose + diphosphate. It functions in the pathway glycan biosynthesis; glycogen biosynthesis. Its function is as follows. Involved in the biosynthesis of ADP-glucose, a building block required for the elongation reactions to produce glycogen. Catalyzes the reaction between ATP and alpha-D-glucose 1-phosphate (G1P) to produce pyrophosphate and ADP-Glc. The protein is Glucose-1-phosphate adenylyltransferase of Anaeromyxobacter dehalogenans (strain 2CP-C).